A 435-amino-acid chain; its full sequence is GTPase Der (435 aa).

EngA-type G domains lie at Pro4–Ala167 and Ile175–Thr350. GTP contacts are provided by residues Gly10–Ser17, Asp57–Ile61, Asn119–Asp122, Gly181–Ser188, Asp228–Ile232, and Asn293–Asp296. The 85-residue stretch at Arg351 to Lys435 folds into the KH-like domain.

It belongs to the TRAFAC class TrmE-Era-EngA-EngB-Septin-like GTPase superfamily. EngA (Der) GTPase family. In terms of assembly, associates with the 50S ribosomal subunit.

In terms of biological role, GTPase that plays an essential role in the late steps of ribosome biogenesis. The protein is GTPase Der of Lactobacillus johnsonii (strain CNCM I-12250 / La1 / NCC 533).